The following is a 398-amino-acid chain: Cytochrome b (398 aa).

Transmembrane regions (helical) follow at residues 33–53 (FGSL…FLAM), 77–98 (WLIR…YLHI), 113–133 (WNIG…GYVL), and 178–198 (FFAF…IHLL). Heme b is bound by residues His-83 and His-97. The heme b site is built by His-182 and His-196. His-201 provides a ligand contact to a ubiquinone. The next 4 membrane-spanning stretches (helical) occupy residues 226-246 (YKDL…SLFA), 288-308 (LGGV…PILH), 320-340 (FTQL…WIGG), and 347-367 (YVVI…FLIP).

The protein belongs to the cytochrome b family. The cytochrome bc1 complex contains 3 respiratory subunits (MT-CYB, CYC1 and UQCRFS1), 2 core proteins (UQCRC1 and UQCRC2) and probably 6 low-molecular weight proteins. Requires heme b as cofactor.

It localises to the mitochondrion inner membrane. In terms of biological role, component of the ubiquinol-cytochrome c reductase complex (complex III or cytochrome b-c1 complex) that is part of the mitochondrial respiratory chain. The b-c1 complex mediates electron transfer from ubiquinol to cytochrome c. Contributes to the generation of a proton gradient across the mitochondrial membrane that is then used for ATP synthesis. This is Cytochrome b (mt-cyb) from Channa asiatica (Small snakehead).